Consider the following 330-residue polypeptide: Malate dehydrogenase (330 aa).

Gly-12–Gly-18 is an NAD(+) binding site. Arg-93 and Arg-99 together coordinate substrate. NAD(+)-binding positions include Asn-106, Gln-113, and Val-130 to Asn-132. Substrate is bound by residues Asn-132 and Arg-163. His-188 serves as the catalytic Proton acceptor.

The protein belongs to the LDH/MDH superfamily. MDH type 2 family.

The enzyme catalyses (S)-malate + NAD(+) = oxaloacetate + NADH + H(+). Catalyzes the reversible oxidation of malate to oxaloacetate. The sequence is that of Malate dehydrogenase from Legionella pneumophila (strain Lens).